The sequence spans 374 residues: Chaperone protein DnaJ (374 aa).

In terms of domain architecture, J spans 3–67; that stretch reads DFYQILGVSR…ETRARYDQFG (65 aa). The segment at 99–118 is disordered; that stretch reads GQSSQGGRSQRRGPQQGDDL. Residues 103-115 are compositionally biased toward low complexity; the sequence is QGGRSQRRGPQQG. The segment at 132–214 adopts a CR-type zinc-finger fold; that stretch reads GQQREINIPH…CGGNGVKQVR (83 aa). Residues Cys-145, Cys-148, Cys-162, Cys-165, Cys-188, Cys-191, Cys-202, and Cys-205 each contribute to the Zn(2+) site. CXXCXGXG motif repeat units lie at residues 145–152, 162–169, 188–195, and 202–209; these read CEVCRGTG, CTTCGGSG, CPTCNGVG, and CTSCGGNG.

It belongs to the DnaJ family. As to quaternary structure, homodimer. Zn(2+) serves as cofactor.

Its subcellular location is the cytoplasm. Functionally, participates actively in the response to hyperosmotic and heat shock by preventing the aggregation of stress-denatured proteins and by disaggregating proteins, also in an autonomous, DnaK-independent fashion. Unfolded proteins bind initially to DnaJ; upon interaction with the DnaJ-bound protein, DnaK hydrolyzes its bound ATP, resulting in the formation of a stable complex. GrpE releases ADP from DnaK; ATP binding to DnaK triggers the release of the substrate protein, thus completing the reaction cycle. Several rounds of ATP-dependent interactions between DnaJ, DnaK and GrpE are required for fully efficient folding. Also involved, together with DnaK and GrpE, in the DNA replication of plasmids through activation of initiation proteins. The sequence is that of Chaperone protein DnaJ from Prochlorococcus marinus subsp. pastoris (strain CCMP1986 / NIES-2087 / MED4).